Consider the following 97-residue polypeptide: Putative pterin-4-alpha-carbinolamine dehydratase (97 aa).

This sequence belongs to the pterin-4-alpha-carbinolamine dehydratase family.

The enzyme catalyses (4aS,6R)-4a-hydroxy-L-erythro-5,6,7,8-tetrahydrobiopterin = (6R)-L-erythro-6,7-dihydrobiopterin + H2O. This Opitutus terrae (strain DSM 11246 / JCM 15787 / PB90-1) protein is Putative pterin-4-alpha-carbinolamine dehydratase.